The following is an 802-amino-acid chain: MTTTFEFLQPRIHGFATCCSSNSLLYSKASRFFNDRCRVYRQNPNRFVSNSITLPLQKKQVTVLRNHERFNLWDGFSRKKSRLVVNCQEDDQNESSSEEEESSQSTPAKSERKREKKEDKVWWSKGKKWQWQPIIQAQGIGVLLLQLSVVMFVMRLLRPGIPLPGSEPRIQTTFVSVPYSEFLSKVNSNQVQKVEVDGVQVLFKLRDDGKWQESETSRLSQSSESLLRTVAPTKRVVYSTTRPGDIKTPYEKMLGNNVEFGSPEKRSGGFFNSALIALFYIAVLAGLIRFPVSFSTSSTGQLRTRKAGGPDGGKVSGGGETITFADVAGVDEAKEELEEIVEFLRNPEKYVRLGARPPRGVLLVGLPGTGKTLLAKAVAGEAEVPFISCSASEFVELYVGMGASRVRDLFARAKKEAPSIIFIDEIDAVAKSRDGKFRMGSNDEREQTLNQLLTEMDGFDSNSAVIVLGATNRADVLDPALRRPGRFDRVVTVETPDKIGRESILRVHVSKKELPLGDDVNLGSIASMTTGFTGADLANLVNEAALLAGRKNKTNVEKIDFIQAVERSIAGIEKKSARLKGNEKAVVARHEAGHAVVGTAVANLLTGQPRVEKLSILPRTGGALGFTYIPPTSEDRYLLFIDELLGRLVTLLGGRAAEEVVYSGRISTGAFDDIRRATDMAYKAVAEYGLNQKIGPVSVATLSGGGIDDSGGSPWGRDQGKLVDLVQKEVTILLQSALDVALSVVRANPDVLEGLGAQLEEKEKVEGEELQKWLSMVVAPEELAVFVEGKQELLLPAQASSS.

The transit peptide at 1–55 (MTTTFEFLQPRIHGFATCCSSNSLLYSKASRFFNDRCRVYRQNPNRFVSNSITLP) directs the protein to the chloroplast. Positions 87–117 (CQEDDQNESSSEEEESSQSTPAKSERKREKK) are disordered. The span at 88–102 (QEDDQNESSSEEEES) shows a compositional bias: acidic residues. The next 2 membrane-spanning stretches (helical) occupy residues 134–154 (IIQA…MFVM) and 268–288 (GGFF…AGLI). ATP is bound at residue 365-372 (GLPGTGKT). H590 lines the Zn(2+) pocket. Residue E591 is part of the active site. Residues H594 and D673 each contribute to the Zn(2+) site.

It in the N-terminal section; belongs to the AAA ATPase family. In the C-terminal section; belongs to the peptidase M41 family. Zn(2+) is required as a cofactor.

Its subcellular location is the plastid. The protein localises to the chloroplast thylakoid membrane. Functionally, probable ATP-dependent zinc metallopeptidase. This Arabidopsis thaliana (Mouse-ear cress) protein is ATP-dependent zinc metalloprotease FTSH 7, chloroplastic (FTSH7).